The sequence spans 90 residues: Bombyxin B-7 (90 aa).

The N-terminal stretch at 1–20 (MMKTSVMLMLVVVISLMCSG) is a signal peptide. Intrachain disulfides connect Cys-30-Cys-76, Cys-42-Cys-89, and Cys-75-Cys-80. Residues 49–67 (GGAQYAPYFWTRQYLGSRG) constitute a propeptide, c peptide like.

This sequence belongs to the insulin family. As to quaternary structure, heterodimer of a B chain and an A chain linked by two disulfide bonds.

It is found in the secreted. Functionally, brain peptide responsible for activation of prothoracic glands to produce ecdysone in insects. This is Bombyxin B-7 (BBXB7) from Bombyx mori (Silk moth).